A 163-amino-acid chain; its full sequence is uncharacterized protein (163 aa).

Residues 136-161 adopt a coiled-coil conformation; that stretch reads QKYIENHQKEINEHVEKLRTLHKELR.

This is an uncharacterized protein from Acanthamoeba polyphaga (Amoeba).